Consider the following 337-residue polypeptide: Inositol 2-dehydrogenase (337 aa).

It belongs to the Gfo/Idh/MocA family. Homotetramer.

The enzyme catalyses myo-inositol + NAD(+) = scyllo-inosose + NADH + H(+). In terms of biological role, involved in the oxidation of myo-inositol (MI) to 2-keto-myo-inositol (2KMI or 2-inosose). In Ralstonia nicotianae (strain ATCC BAA-1114 / GMI1000) (Ralstonia solanacearum), this protein is Inositol 2-dehydrogenase.